The primary structure comprises 131 residues: Fumarate reductase subunit C (131 aa).

Transmembrane regions (helical) follow at residues 30–50 (EGTC…VFAL), 58–78 (AGFV…VTLI), and 109–129 (IVRG…AVAL).

It belongs to the FrdC family. As to quaternary structure, part of an enzyme complex containing four subunits: a flavoprotein (FrdA), an iron-sulfur protein (FrdB), and two hydrophobic anchor proteins (FrdC and FrdD).

It localises to the cell inner membrane. Functionally, two distinct, membrane-bound, FAD-containing enzymes are responsible for the catalysis of fumarate and succinate interconversion; fumarate reductase is used in anaerobic growth, and succinate dehydrogenase is used in aerobic growth. Anchors the catalytic components of the fumarate reductase complex to the cell inner membrane, binds quinones. The protein is Fumarate reductase subunit C of Proteus mirabilis (strain HI4320).